Consider the following 459-residue polypeptide: Argininosuccinate lyase (459 aa).

It belongs to the lyase 1 family. Argininosuccinate lyase subfamily.

It is found in the cytoplasm. The catalysed reaction is 2-(N(omega)-L-arginino)succinate = fumarate + L-arginine. It functions in the pathway amino-acid biosynthesis; L-arginine biosynthesis; L-arginine from L-ornithine and carbamoyl phosphate: step 3/3. In Geobacillus kaustophilus (strain HTA426), this protein is Argininosuccinate lyase.